Reading from the N-terminus, the 530-residue chain is Developmental and secondary metabolism regulator VEL1 (530 aa).

One can recognise a Velvet domain in the interval 26 to 220; that stretch reads NRSLWYQMTV…ADQGCQVRIR (195 aa). The Nuclear localization signal signature appears at 40–45; sequence ERARAC. The interval 206-516 is disordered; it reads LSKTVADQGC…HDQGWYSRAD (311 aa). Residues 244–253 are compositionally biased toward basic and acidic residues; sequence FERREEDFGR. The span at 295–305 shows a compositional bias: pro residues; it reads YPPPPPPPSYE. Residues 347 to 356 show a composition bias toward polar residues; the sequence is YAPTAQSPYS. Basic and acidic residues predominate over residues 380–389; it reads VKHDLYDRRQ. Over residues 390–404 the composition is skewed to low complexity; it reads STSSYVPPSPSVYST. Over residues 415–426 the composition is skewed to pro residues; sequence SYPPTPVAAPRP. The interval 429–460 is PEST; that stretch reads MHSQTSLPALKIDQLVSPVSPLPPIEPQTGPA. The segment covering 478-490 has biased composition (polar residues); it reads FAQSTRPLHNGQR.

This sequence belongs to the velvet family. VeA subfamily. Component of the heterotrimeric velvet complex composed of LAE1, VEL1 and VEL2; VEL1 acting as a bridging protein between LAE1 and VEL2. Interacts with LAE1.

The protein resides in the nucleus. It localises to the cytoplasm. Component of the velvet transcription factor complex that controls sexual/asexual developmental ratio in response to light, promoting sexual development in the darkness while stimulating asexual sporulation under illumination. The velvet complex hat acts as a global regulator for secondary metabolite gene expression. Controls positively the expression of the gibberellins, fumonisins and fusarin C gene clusters. Controls the expression of the fusaric acid gene cluster. Controls negatively the expression of the bikaverin gene cluster. Regulates the expression of laeA. Plays a crucial role in virulence. In Gibberella fujikuroi (strain CBS 195.34 / IMI 58289 / NRRL A-6831) (Bakanae and foot rot disease fungus), this protein is Developmental and secondary metabolism regulator VEL1.